We begin with the raw amino-acid sequence, 379 residues long: MHVIGLMSGTSVDGIDAALVEISGRELDLQVDLIAAQTYPYPDALRNQILAVCRGEPLSIEALAGLDDAIAMQFAQAAQSIQAEATLTAELIGSHGQTVFHRPPQGNLGYTLQIGRGAVIAHQTGINTVSNFRVADMAAGGQGAPLVSKLDICLLSHPEFYRCVQNIGGIGNVTYLPPLTDASQLGMGVKGWDTGPGNVLMDLAVAHFSKGELTYDADGAWAAQGNPCQPLIEEWLRHPFFQAPPPKSTGRELFSPDYLQTCLQTAASYQLSPADMLATLTDFTAATIVYNYDQFLPHPPDQVVLCGGGSRNGYLRQCLQQRLGGSTVLTTDDVGLNSDAKEAIAFAVLAYWQQLQIPGNVPAVTGASGPILLGELHLV.

Residue 9–16 (GTSVDGID) coordinates ATP.

This sequence belongs to the anhydro-N-acetylmuramic acid kinase family.

The enzyme catalyses 1,6-anhydro-N-acetyl-beta-muramate + ATP + H2O = N-acetyl-D-muramate 6-phosphate + ADP + H(+). The protein operates within amino-sugar metabolism; 1,6-anhydro-N-acetylmuramate degradation. It functions in the pathway cell wall biogenesis; peptidoglycan recycling. Catalyzes the specific phosphorylation of 1,6-anhydro-N-acetylmuramic acid (anhMurNAc) with the simultaneous cleavage of the 1,6-anhydro ring, generating MurNAc-6-P. Is required for the utilization of anhMurNAc either imported from the medium or derived from its own cell wall murein, and thus plays a role in cell wall recycling. In Acaryochloris marina (strain MBIC 11017), this protein is Anhydro-N-acetylmuramic acid kinase.